The following is a 61-amino-acid chain: Small ribosomal subunit protein uS14 (61 aa).

4 residues coordinate Zn(2+): Cys-24, Cys-27, Cys-40, and Cys-43.

This sequence belongs to the universal ribosomal protein uS14 family. Zinc-binding uS14 subfamily. Part of the 30S ribosomal subunit. Contacts proteins S3 and S10. Requires Zn(2+) as cofactor.

Its function is as follows. Binds 16S rRNA, required for the assembly of 30S particles and may also be responsible for determining the conformation of the 16S rRNA at the A site. The sequence is that of Small ribosomal subunit protein uS14 from Mesoplasma florum (strain ATCC 33453 / NBRC 100688 / NCTC 11704 / L1) (Acholeplasma florum).